The primary structure comprises 361 residues: Ribosomal RNA small subunit methyltransferase H (361 aa).

Residues 54-56, Asp74, Tyr101, Asp122, and Gln129 contribute to the S-adenosyl-L-methionine site; that span reads GGH. The tract at residues 318-361 is disordered; it reads ARNSRASSAKLRAAQRLAEGQAPRPRRRNKYAPEGRDEPEGGAA. The segment covering 348-361 has biased composition (basic and acidic residues); it reads YAPEGRDEPEGGAA.

The protein belongs to the methyltransferase superfamily. RsmH family.

The protein resides in the cytoplasm. The enzyme catalyses cytidine(1402) in 16S rRNA + S-adenosyl-L-methionine = N(4)-methylcytidine(1402) in 16S rRNA + S-adenosyl-L-homocysteine + H(+). In terms of biological role, specifically methylates the N4 position of cytidine in position 1402 (C1402) of 16S rRNA. In Nitratidesulfovibrio vulgaris (strain DSM 19637 / Miyazaki F) (Desulfovibrio vulgaris), this protein is Ribosomal RNA small subunit methyltransferase H.